The primary structure comprises 79 residues: U1-plectoxin-Pt1c (79 aa).

A signal peptide spans 1–18 (HLILASALICALVVCTFA). The propeptide occupies 19–31 (EEQVNVPFLPDER). Disulfide bonds link C35–C49, C42–C55, C48–C66, C52–C75, and C57–C64. The propeptide occupies 78–79 (RR).

It belongs to the neurotoxin 02 (plectoxin) family. 02 (plectoxin) subfamily. As to expression, expressed by the venom gland.

Its subcellular location is the secreted. Functionally, potent toxin that may paralyze and/or kill insect pests such as H.virescens (lepidoptera), S.exigua (beet armyworm) and M.sexta (tobacco hornworm). This Plectreurys tristis (Spider) protein is U1-plectoxin-Pt1c.